The sequence spans 214 residues: Pyridoxine/pyridoxamine 5'-phosphate oxidase (214 aa).

Residues 8 to 11 (RTNY) and Lys66 each bind substrate. Residues 61–66 (RIVLIK), 76–77 (FT), Arg82, Lys83, and Gln105 each bind FMN. 3 residues coordinate substrate: Tyr123, Arg127, and Ser131. FMN is bound by residues 140–141 (QS) and Trp184. Substrate is bound at residue 190–192 (RLH). An FMN-binding site is contributed by Arg194.

The protein belongs to the pyridoxamine 5'-phosphate oxidase family. Homodimer. It depends on FMN as a cofactor.

It carries out the reaction pyridoxamine 5'-phosphate + O2 + H2O = pyridoxal 5'-phosphate + H2O2 + NH4(+). It catalyses the reaction pyridoxine 5'-phosphate + O2 = pyridoxal 5'-phosphate + H2O2. The protein operates within cofactor metabolism; pyridoxal 5'-phosphate salvage; pyridoxal 5'-phosphate from pyridoxamine 5'-phosphate: step 1/1. It functions in the pathway cofactor metabolism; pyridoxal 5'-phosphate salvage; pyridoxal 5'-phosphate from pyridoxine 5'-phosphate: step 1/1. In terms of biological role, catalyzes the oxidation of either pyridoxine 5'-phosphate (PNP) or pyridoxamine 5'-phosphate (PMP) into pyridoxal 5'-phosphate (PLP). In Burkholderia pseudomallei (strain 1106a), this protein is Pyridoxine/pyridoxamine 5'-phosphate oxidase.